Here is a 420-residue protein sequence, read N- to C-terminus: Putative kinase Y4mE (420 aa).

Asp-302 functions as the Proton acceptor in the catalytic mechanism.

The protein belongs to the HipA Ser/Thr kinase family.

The polypeptide is Putative kinase Y4mE (Sinorhizobium fredii (strain NBRC 101917 / NGR234)).